Reading from the N-terminus, the 158-residue chain is Transcriptional repressor NrdR (158 aa).

Positions 1–20 are disordered; that stretch reads MRCPSCGSLDTQVKDSRPTE. The segment at 3–34 is a zinc-finger region; it reads CPSCGSLDTQVKDSRPTEDSSVIRRRRVCLTC. The 91-residue stretch at 49 to 139 folds into the ATP-cone domain; the sequence is LTVIKRNGRR…VYRNFREAKD (91 aa).

The protein belongs to the NrdR family. Zn(2+) is required as a cofactor.

Negatively regulates transcription of bacterial ribonucleotide reductase nrd genes and operons by binding to NrdR-boxes. This chain is Transcriptional repressor NrdR, found in Afipia carboxidovorans (strain ATCC 49405 / DSM 1227 / KCTC 32145 / OM5) (Oligotropha carboxidovorans).